Reading from the N-terminus, the 473-residue chain is MKILYSLRRFYHVETLFNGTFVLAGRDQETTGFAWWAGNARLINLSGKLLGAHVAHAGLIVFWAGAMNLFEVAHFVPEKPMYEQGLILLPHLATLGWGVGPGGEVLDTFPYFVSGVLHLISSAVLGFGGIYHALLGPETLEESFPFFGYVWKDRNKMTTILGIHLILLGLGAFLLVLKALYFGGVYDTWAPGGGDVRKITNLTLSPSVIFGYLLKSPFGGEGWIVSVDDLEDIIGGHVWLGFICVFGGIWHILTKPFAWARRAFVWSGEAYLSYSLAALSVFGFIACCFVWFNNTAYPSEFYGPTGPEASQAQAFTFLVRDQRLGANVGSAQGPTGLGKYLMRSPTGEVIFGGETMRFWDLRAPWLEPLRGPNGLDLSRLKKDIQPWQERRSAEYMTHAPLGSLNSVGGVATEINAVNYVSPRSWLSTSHFVLGFFFFVGHLWHAGRARAAAAGFEKGIDRDLEPVLYMNPLN.

A propeptide spanning residues 1–14 (MKILYSLRRFYHVE) is cleaved from the precursor. Thr15 is modified (N-acetylthreonine). The residue at position 15 (Thr15) is a Phosphothreonine. The next 5 membrane-spanning stretches (helical) occupy residues 69–93 (LFEVAHFVPEKPMYEQGLILLPHLA), 134–155 (LLGPETLEESFPFFGYVWKDRN), 178–200 (KALYFGGVYDTWAPGGGDVRKIT), 255–275 (KPFAWARRAFVWSGEAYLSYS), and 291–312 (WFNNTAYPSEFYGPTGPEASQA). Glu367 contacts [CaMn4O5] cluster. Residues 447-471 (RARAAAAGFEKGIDRDLEPVLYMNP) traverse the membrane as a helical segment.

Belongs to the PsbB/PsbC family. PsbC subfamily. PSII is composed of 1 copy each of membrane proteins PsbA, PsbB, PsbC, PsbD, PsbE, PsbF, PsbH, PsbI, PsbJ, PsbK, PsbL, PsbM, PsbT, PsbX, PsbY, PsbZ, Psb30/Ycf12, at least 3 peripheral proteins of the oxygen-evolving complex and a large number of cofactors. It forms dimeric complexes. Binds multiple chlorophylls and provides some of the ligands for the Ca-4Mn-5O cluster of the oxygen-evolving complex. It may also provide a ligand for a Cl- that is required for oxygen evolution. PSII binds additional chlorophylls, carotenoids and specific lipids. is required as a cofactor.

It localises to the plastid. The protein resides in the chloroplast thylakoid membrane. Its function is as follows. One of the components of the core complex of photosystem II (PSII). It binds chlorophyll and helps catalyze the primary light-induced photochemical processes of PSII. PSII is a light-driven water:plastoquinone oxidoreductase, using light energy to abstract electrons from H(2)O, generating O(2) and a proton gradient subsequently used for ATP formation. The protein is Photosystem II CP43 reaction center protein of Hordeum vulgare (Barley).